The following is a 679-amino-acid chain: Protein white (679 aa).

Positions 1–34 (MGQEDQEVLIRGGKATSTSAESLNNNNEQPYEQS) are disordered. The segment covering 15-34 (ATSTSAESLNNNNEQPYEQS) has biased composition (polar residues). Positions 84-332 (NRVKGVFCNE…FSYIGATCPT (249 aa)) constitute an ABC transporter domain. 121–128 (GSSGAGKT) is an ATP binding site. 5 consecutive transmembrane segments (helical) span residues 427-445 (LLQT…LGQQ), 457-477 (AIFL…ITVF), 507-525 (LPLF…YPLI), 534-555 (FFTA…GYLI), and 568-586 (VGPP…FLNS). N-linked (GlcNAc...) asparagine glycans are attached at residues N628 and N643. A helical membrane pass occupies residues 651–670 (FDFIGLALLIVGFRISAYIA).

Belongs to the ABC transporter superfamily. ABCG family. Eye pigment precursor importer (TC 3.A.1.204) subfamily.

The protein resides in the membrane. Its function is as follows. May be part of a membrane-spanning permease system necessary for the transport of pigment precursors into pigment cells responsible for eye color. The chain is Protein white (W) from Ceratitis capitata (Mediterranean fruit fly).